Here is a 296-residue protein sequence, read N- to C-terminus: Inactive uridine phosphorylase B (296 aa).

Belongs to the PNP/UDP phosphorylase family. Homodimer.

This Schistosoma mansoni (Blood fluke) protein is Inactive uridine phosphorylase B.